Reading from the N-terminus, the 581-residue chain is Pyridine nucleotide-disulfide oxidoreductase domain-containing protein 2 (581 aa).

38–71 (VVIGAGHNGLVAAAYLQRLGVNTAVFERRHVIGG) is a binding site for FAD.

The protein belongs to the carotenoid/retinoid oxidoreductase family. As to quaternary structure, interacts with COX5B; this interaction may contribute to localize PYROXD2 to the inner face of the inner mitochondrial membrane.

Its subcellular location is the mitochondrion matrix. In terms of biological role, probable oxidoreductase that may play a role as regulator of mitochondrial function. The chain is Pyridine nucleotide-disulfide oxidoreductase domain-containing protein 2 from Homo sapiens (Human).